We begin with the raw amino-acid sequence, 397 residues long: Presenilin-like protein At2g29900 (397 aa).

Residues 1 to 17 (MDRNQRPRSILDSLGEE) lie on the Cytoplasmic side of the membrane. Residues 18-38 (LIAILTPVSICMFTVVLLVCI) form a helical membrane-spanning segment. At 39-76 (LNSDPSSSSASFSSIATAAYSESDSDSSWDKFVGALLN) the chain is on the lumenal side. A helical transmembrane segment spans residues 77 to 97 (SVVFVAAITVATFVLVLLFYL). Over 98–106 (RCVKFLKFY) the chain is Cytoplasmic. A helical transmembrane segment spans residues 107 to 127 (MGFSAFIVLGNLGGEILVLLI). Residues 128–135 (DRFRFPID) are Lumenal-facing. The helical transmembrane segment at 136-156 (SITFLILLFNFSVVGVFAVFM) threads the bilayer. Over 157–158 (SK) the chain is Cytoplasmic. Residues 159-179 (FSILITQGYLVWIGVLVAYFF) traverse the membrane as a helical segment. Residues 180 to 188 (TLLPEWTTW) are Lumenal-facing. The chain crosses the membrane as a helical span at residues 189 to 209 (VLLVALALYDIAAVLLPVGPL). D198 is an active-site residue. Topologically, residues 210–305 (RLLVEMAISR…NSETFLEGIG (96 aa)) are cytoplasmic. The helical transmembrane segment at 306–326 (LGSSGAIKLGLGDFIFYSVLV) threads the bilayer. D318 is an active-site residue. Over 327–336 (GRAAMYDLMT) the chain is Lumenal. Residues 337–357 (VYACYLAIIAGLGITLMLLSV) traverse the membrane as a helical segment. Over 358–366 (YQKALPALP) the chain is Cytoplasmic. The short motif at 363–365 (PAL) is the PAL element. The helical intramembrane region spans 367–387 (VSIMLGVVFYFLARLLLEVFV). Over 388–397 (VQCSSNLVMF) the chain is Cytoplasmic.

It belongs to the peptidase A22A family. Homodimer. Probable component of the gamma-secretase complex, a complex composed of a presenilin homodimer, nicastrin, APH1 and PEN2.

The protein resides in the endoplasmic reticulum membrane. It localises to the golgi apparatus membrane. Probable subunit of the gamma-secretase complex, an endoprotease complex that catalyzes the intramembrane cleavage of integral membrane proteins such as Notch receptors. The protein is Presenilin-like protein At2g29900 of Arabidopsis thaliana (Mouse-ear cress).